Reading from the N-terminus, the 268-residue chain is uncharacterized protein (268 aa).

Belongs to the glycosyltransferase 2 family.

This is an uncharacterized protein from Bacillus subtilis (strain 168).